The following is a 1254-amino-acid chain: NPC intracellular cholesterol transporter 1 homolog 1b (1254 aa).

The N-terminal stretch at 1–16 (MKVIFATIWLIAGAWS) is a signal peptide. The Extracellular segment spans residues 17-272 (QSAEQLGCIW…WKIAGLYGVT (256 aa)). 8 disulfide bridges follow: C24–C81, C62–C116, C82–C120, C104–C241, C107–C161, C178–C186, C231–C246, and C243–C250. N-linked (GlcNAc...) asparagine glycosylation is found at N123 and N132. Residues 273 to 293 (FILALIIACALSFFIFWGAFG) form a helical membrane-spanning segment. Residues 294–325 (KTSAPSVCMPTLFGEFFYHGFRIWGTFCAKHP) lie on the Cytoplasmic side of the membrane. Residues 326–346 (VIVLALCSWAIAGLSFGIRYM) traverse the membrane as a helical segment. Topologically, residues 347 to 593 (TITTDPVELW…AIVELSEGEV (247 aa)) are extracellular. N389 carries N-linked (GlcNAc...) asparagine glycosylation. The cysteines at positions 438 and 454 are disulfide-linked. The N-linked (GlcNAc...) asparagine glycan is linked to N479. Cysteines 491 and 500 form a disulfide. In terms of domain architecture, SSD spans 592–757 (EVSTVVISYV…ITAFVALMAI (166 aa)). Residues 594–614 (STVVISYVVMFVYVAIALGHI) traverse the membrane as a helical segment. Residues 615–625 (RSCRGFLRESR) are Cytoplasmic-facing. A helical transmembrane segment spans residues 626-646 (IMLAIGGIVIVLASVVCSLGF). The Extracellular portion of the chain corresponds to 647 to 657 (WGYLDVTTTML). The helical transmembrane segment at 658–678 (AIEVIPFLVLAVGVDNIFIMV) threads the bilayer. Residues 679 to 736 (HTYQRLDHSKFKTTHEAIGEAIGQVGPSILQTAGSEMACFAIGCISDMPAVKTFAMYA) lie on the Cytoplasmic side of the membrane. The chain crosses the membrane as a helical span at residues 737 to 757 (AIAILLDFLLQITAFVALMAI). Residues 758–815 (DEKRYLDGRLDMLCCVKSGGKKINDEDGDGVDRPKEVGLLETLFKNFYSPFLLSKPVK) are Extracellular-facing. The chain crosses the membrane as a helical span at residues 816 to 836 (VSVLLIFTVITCLSLMVTPSI). Over 837–857 (EKGLDQEMSMPKNSHVVKYFR) the chain is Cytoplasmic. The helical transmembrane segment at 858 to 878 (YMVDLLAMGAPVYWVLKPGLN) threads the bilayer. The Extracellular segment spans residues 879–1079 (YSEPLQQNLI…EQYLTIWGDA (201 aa)). C889 and C894 are joined by a disulfide. 2 N-linked (GlcNAc...) asparagine glycosylation sites follow: N896 and N939. Disulfide bonds link C935/C990, C936/C958, and C946/C955. Residues 1080–1100 (MFSLGMSLVAIFLVTLLITGL) form a helical membrane-spanning segment. Topologically, residues 1101–1105 (DITST) are cytoplasmic. Residues 1106–1126 (FIVLFMVICILINMLGMMWAW) traverse the membrane as a helical segment. Residues 1127–1132 (SINLNA) are Extracellular-facing. The helical transmembrane segment at 1133–1153 (ISLVNLVVCVGIGVEFVAHIV) threads the bilayer. Residues 1154 to 1174 (RSFKRAEGTAQERARHSLNVT) lie on the Cytoplasmic side of the membrane. Residues 1175 to 1195 (GSSVLSGITLTKFAGIVVLGF) form a helical membrane-spanning segment. Residues 1196 to 1207 (SNSQIFQVFYFR) lie on the Extracellular side of the membrane. Residues 1208–1228 (MYLGIVLIGAAHGLILLPVLL) traverse the membrane as a helical segment. Residues 1229 to 1254 (SLLGPPQKLARSSGAEPTASITITTN) are Cytoplasmic-facing.

It belongs to the patched family. Expressed in the midgut.

Its subcellular location is the cell membrane. It carries out the reaction cholesterol(in) = cholesterol(out). Its function is as follows. Important for cholesterol absorption at the midgut epithelium. Acts only in the early steps of sterol absorption, prior to Npc1a-dependent intracellular sterol trafficking. This chain is NPC intracellular cholesterol transporter 1 homolog 1b, found in Drosophila melanogaster (Fruit fly).